Here is a 580-residue protein sequence, read N- to C-terminus: Viral transcription factor IE2 (580 aa).

Residues 1 to 11 show a composition bias toward basic and acidic residues; the sequence is MESSAKRKMDP. Disordered stretches follow at residues 1–30 and 99–161; these read MESS…TPVT and DSSS…VIIK. The span at 99–133 shows a compositional bias: polar residues; it reads DSSSTGPTLTTHSCSVSSAPLNKPTPTSVAVTNTP. Residues K175 and K180 each participate in a glycyl lysine isopeptide (Lys-Gly) (interchain with G-Cter in SUMO) cross-link. Residues 199–202 carry the SUMO-interacting motif 1/SIM1 motif; sequence CIVI. Phosphoserine; by host CK2 is present on residues S203 and S205. The tract at residues 206 to 335 is disordered; the sequence is EEEQGEEVET…KSKRISELDN (130 aa). Low complexity-rich tracts occupy residues 216-236, 259-271, and 302-317; these read RGAT…TSPT, SSSS…SASD, and AASS…SSGG. The SUMO-interacting motif 1/SIM2 signature appears at 410–413; sequence IQII. The SUMO-interacting motif 1/SIM3 signature appears at 501–504; that stretch reads VDLL.

The protein belongs to the HHV-5 IE2 protein family. As to quaternary structure, interacts with host SUMO-modified form of TATA-binding protein (TBP)-associated factor 12/TAF12 in a SIM-dependent manner; this interaction increases the transactivation activity of IE2. Interacts with host CHAF1A. Interacts with several components of the host transcriptional machinery including TBP, TF2B and CREB1. Interacts with host DNA replication licensing factor MCM3. Interacts with host PLSCR1; this interaction inhibits IE2 transactivating activity. In terms of processing, phosphorylated by host CK2 at Ser-203 and Ser-205; leading to enhanced SUMOylation. SUMOylated; SUMOylation is enhanced when IE2 is phosphorylated by host CK2. The sumoylation is necessary for efficient replication of the virus and thus for the function of this viral transcription factor.

It is found in the host nucleus. Stimulates viral early and late gene expression and thus play a crucial role in the regulation of productive infection. Selectively drives host RNA Pol II transcription initiation at a subset of viral early-late and late promoters without substantially affecting Pol II transcription of expressed host genes. Mechanistically, forms a repressive complex at the major immediate-early promoter region involving direct association with host nucleosomes and TBP. Concerning activation, stimulates transcription by binding nearby, but not within, core promoter regions. In addition, activates quiescent cells to reenter the cell cycle and up-regulates several E2F-responsive genes, which are responsible for pushing the cell into S phase. In S-phase, inhibits cellular DNA synthesis and blocks further cell cycle progression. This is Viral transcription factor IE2 (UL122) from Human cytomegalovirus (strain AD169) (HHV-5).